We begin with the raw amino-acid sequence, 201 residues long: 3-isopropylmalate dehydratase small subunit (201 aa).

Belongs to the LeuD family. LeuD type 1 subfamily. In terms of assembly, heterodimer of LeuC and LeuD.

The catalysed reaction is (2R,3S)-3-isopropylmalate = (2S)-2-isopropylmalate. Its pathway is amino-acid biosynthesis; L-leucine biosynthesis; L-leucine from 3-methyl-2-oxobutanoate: step 2/4. Its function is as follows. Catalyzes the isomerization between 2-isopropylmalate and 3-isopropylmalate, via the formation of 2-isopropylmaleate. The polypeptide is 3-isopropylmalate dehydratase small subunit (Enterobacter sp. (strain 638)).